Consider the following 590-residue polypeptide: V-type ATP synthase alpha chain (590 aa).

231–238 (GPFGSGKT) is an ATP binding site.

It belongs to the ATPase alpha/beta chains family.

The enzyme catalyses ATP + H2O + 4 H(+)(in) = ADP + phosphate + 5 H(+)(out). In terms of biological role, produces ATP from ADP in the presence of a proton gradient across the membrane. The V-type alpha chain is a catalytic subunit. This Clostridium botulinum (strain ATCC 19397 / Type A) protein is V-type ATP synthase alpha chain.